The primary structure comprises 259 residues: 1,2-dihydroxy-1,2-dihydronaphthalene dehydrogenase (259 aa).

8 to 32 (SITGAGSGIGLELVRSFKSAGYYVS) contributes to the NAD(+) binding site. S140 serves as a coordination point for substrate. Residue Y153 is the Proton acceptor of the active site.

The protein belongs to the short-chain dehydrogenases/reductases (SDR) family.

It catalyses the reaction (1R,2S)-1,2-dihydronaphthalene-1,2-diol + NAD(+) = naphthalene-1,2-diol + NADH + H(+). The catalysed reaction is cis-1,2-dihydroxy-1,2-dihydrodibenzothiophene + NAD(+) = 1,2-dihydroxydibenzothiophene + NADH + H(+). It participates in aromatic compound metabolism; naphthalene degradation. In terms of biological role, catalyzes the oxidation of naphthalene dihydrodiol into 1,2-dihydroxynaphthalene. The polypeptide is 1,2-dihydroxy-1,2-dihydronaphthalene dehydrogenase (doxE) (Pseudomonas sp. (strain C18)).